Reading from the N-terminus, the 319-residue chain is RWD domain-containing protein 2B (319 aa).

The 125-residue stretch at 41 to 165 (SELDLLASMF…EWVREHASGY (125 aa)) folds into the RWD domain. The residue at position 275 (S275) is a Phosphoserine.

In Pongo abelii (Sumatran orangutan), this protein is RWD domain-containing protein 2B (RWDD2B).